We begin with the raw amino-acid sequence, 652 residues long: Sodium-dependent phosphate transporter 1-A (652 aa).

Topologically, residues 1 to 25 (MESTTLASLAAVSVLAAGAQTDMSD) are cytoplasmic. A helical transmembrane segment spans residues 26–46 (VLWLLILGFVIAFILAFSVGA). Over 47-66 (NDVANSFGTAVGSGVVTLRQ) the chain is Extracellular. The chain crosses the membrane as a helical span at residues 67 to 87 (ACILATIFETVGAMLLGAKVS). Residues 88–104 (ETIRSGIIDVHMYNGSE) are Cytoplasmic-facing. Residues 105-125 (AVLMAGSISAMFGSAVWQLAA) form a helical membrane-spanning segment. Residues 126–162 (SFLKLPISGTHCIVGATIGFSMVARGHQGVKWLELLR) lie on the Extracellular side of the membrane. Residues 163-183 (IVASWFLSPLLSGIMSAVLFY) form a helical membrane-spanning segment. Over 184–201 (FVRKFILNKDDPVPNGLR) the chain is Cytoplasmic. A helical membrane pass occupies residues 202–222 (ALPVFYAVTMGINLFSIMFTG). Residues 223 to 234 (APMLGFDRIPWW) lie on the Extracellular side of the membrane. A helical membrane pass occupies residues 235–255 (GTLLISLGCAILTALVVWFIV). At 256-482 (CPRLKKKMQS…IDELEIDKPE (227 aa)) the chain is on the cytoplasmic side. Residues 278 to 308 (TQLVEKKPSSNGLMDHHPGPPRNYSPVPQTP) form a disordered region. The segment covering 281-295 (VEKKPSSNGLMDHHP) has biased composition (basic and acidic residues). Positions 297–308 (PPRNYSPVPQTP) are enriched in pro residues. Residues 483-503 (VSTLFQFLQILTACFGSFAHG) traverse the membrane as a helical segment. The Extracellular segment spans residues 504–531 (GNDVSNAIGPLVALWLIYDSASVAPSAP). A helical transmembrane segment spans residues 532–552 (TPIWLLLYGGVGICTGLWIWG). Residues 553-571 (RRVIQTMGKDLTPITPSSG) are Cytoplasmic-facing. A helical transmembrane segment spans residues 572–592 (FSIELASAITVVVASNIGLPV). Residues 593–621 (STTHCKVGSVVSVGWLRSRKAVDWHLFRN) lie on the Extracellular side of the membrane. A helical membrane pass occupies residues 622–642 (IFIAWFVTVPISGLISAAIMA). Residues 643–652 (LFYYVILPLT) lie on the Cytoplasmic side of the membrane.

The protein belongs to the inorganic phosphate transporter (PiT) (TC 2.A.20) family.

It localises to the membrane. Functionally, sodium-phosphate symporter which plays a fundamental housekeeping role in phosphate transport. The protein is Sodium-dependent phosphate transporter 1-A (slc20a1a) of Danio rerio (Zebrafish).